A 196-amino-acid chain; its full sequence is Charged multivesicular body protein 1a (196 aa).

Residues L5 to N41 adopt a coiled-coil conformation. The span at Q170–R181 shows a compositional bias: polar residues. Positions Q170–N196 are disordered. An MIT-interacting motif motif is present at residues D185–R195.

It belongs to the SNF7 family. As to quaternary structure, probable peripherally associated component of the endosomal sorting required for transport complex III (ESCRT-III).

It is found in the cytoplasm. The protein localises to the endosome membrane. Functionally, probable peripherally associated component of the endosomal sorting required for transport complex III (ESCRT-III) which is involved in multivesicular bodies (MVBs) formation and sorting of endosomal cargo proteins into MVBs. MVBs contain intraluminal vesicles (ILVs) that are generated by invagination and scission from the limiting membrane of the endosome and mostly are delivered to lysosomes enabling degradation of membrane proteins, such as stimulated growth factor receptors, lysosomal enzymes and lipids. In Xenopus laevis (African clawed frog), this protein is Charged multivesicular body protein 1a (chmp1a).